We begin with the raw amino-acid sequence, 110 residues long: Inner membrane protein H108R (110 aa).

A helical membrane pass occupies residues 10–32 (LIVIITILITTRELSTTMLIVSL).

The protein belongs to the asfivirus H108R family.

It localises to the virion membrane. The protein is Inner membrane protein H108R of African swine fever virus (isolate Pig/Kenya/KEN-50/1950) (ASFV).